We begin with the raw amino-acid sequence, 201 residues long: Large ribosomal subunit protein uL4 (201 aa).

Residues 44–68 form a disordered region; the sequence is RAQKSRADVSGSGRKPWRQKGTGRA.

This sequence belongs to the universal ribosomal protein uL4 family. As to quaternary structure, part of the 50S ribosomal subunit.

In terms of biological role, one of the primary rRNA binding proteins, this protein initially binds near the 5'-end of the 23S rRNA. It is important during the early stages of 50S assembly. It makes multiple contacts with different domains of the 23S rRNA in the assembled 50S subunit and ribosome. Functionally, forms part of the polypeptide exit tunnel. The chain is Large ribosomal subunit protein uL4 from Buchnera aphidicola subsp. Schizaphis graminum (strain Sg).